We begin with the raw amino-acid sequence, 276 residues long: MGLKRFKPVTPGRRFMVISDFSDITKTEPEKSLLAPLKKTGGRNHHGRVTVRHRGGGHKRRYRIIDFKRYDKAGIPAKVLAIEYDPNRSARIALLLYADGEKRYILAPKGVNVGDTLMSGPDAEIRPGNALPLEKIPVGTLVHNVEFTPGKGGQIARAAGTYCQIMAKEGNYALLRMPSGELRKVHIKCYATVGVVGNEDHKNEVHGKAGRVRWLGRRPHVRGVAMNPVDHPHGGGEGRGKGHHPTSPWGLPTKGYKTRRGKRPSDKFIVRRRNEV.

Residues 223-276 (GVAMNPVDHPHGGGEGRGKGHHPTSPWGLPTKGYKTRRGKRPSDKFIVRRRNEV) are disordered. Composition is skewed to basic and acidic residues over residues 230-240 (DHPHGGGEGRG) and 263-276 (RPSD…RNEV).

It belongs to the universal ribosomal protein uL2 family. In terms of assembly, part of the 50S ribosomal subunit. Forms a bridge to the 30S subunit in the 70S ribosome.

Its function is as follows. One of the primary rRNA binding proteins. Required for association of the 30S and 50S subunits to form the 70S ribosome, for tRNA binding and peptide bond formation. It has been suggested to have peptidyltransferase activity; this is somewhat controversial. Makes several contacts with the 16S rRNA in the 70S ribosome. The protein is Large ribosomal subunit protein uL2 of Thermotoga maritima (strain ATCC 43589 / DSM 3109 / JCM 10099 / NBRC 100826 / MSB8).